The following is a 269-amino-acid chain: Thymidylate synthase (269 aa).

Residue arginine 21 coordinates dUMP. Histidine 51 contributes to the (6R)-5,10-methylene-5,6,7,8-tetrahydrofolate binding site. Arginine 126–arginine 127 serves as a coordination point for dUMP. Cysteine 146 serves as the catalytic Nucleophile. DUMP-binding positions include arginine 171–aspartate 174, asparagine 182, and histidine 212–tyrosine 214. Residue aspartate 174 participates in (6R)-5,10-methylene-5,6,7,8-tetrahydrofolate binding. A (6R)-5,10-methylene-5,6,7,8-tetrahydrofolate-binding site is contributed by alanine 268.

Belongs to the thymidylate synthase family. Bacterial-type ThyA subfamily. As to quaternary structure, homodimer.

Its subcellular location is the cytoplasm. The catalysed reaction is dUMP + (6R)-5,10-methylene-5,6,7,8-tetrahydrofolate = 7,8-dihydrofolate + dTMP. Its pathway is pyrimidine metabolism; dTTP biosynthesis. Catalyzes the reductive methylation of 2'-deoxyuridine-5'-monophosphate (dUMP) to 2'-deoxythymidine-5'-monophosphate (dTMP) while utilizing 5,10-methylenetetrahydrofolate (mTHF) as the methyl donor and reductant in the reaction, yielding dihydrofolate (DHF) as a by-product. This enzymatic reaction provides an intracellular de novo source of dTMP, an essential precursor for DNA biosynthesis. The chain is Thymidylate synthase from Methylocella silvestris (strain DSM 15510 / CIP 108128 / LMG 27833 / NCIMB 13906 / BL2).